A 132-amino-acid chain; its full sequence is Large ribosomal subunit protein uL22 (132 aa).

Belongs to the universal ribosomal protein uL22 family. As to quaternary structure, part of the 50S ribosomal subunit.

In terms of biological role, this protein binds specifically to 23S rRNA; its binding is stimulated by other ribosomal proteins, e.g. L4, L17, and L20. It is important during the early stages of 50S assembly. It makes multiple contacts with different domains of the 23S rRNA in the assembled 50S subunit and ribosome. The globular domain of the protein is located near the polypeptide exit tunnel on the outside of the subunit, while an extended beta-hairpin is found that lines the wall of the exit tunnel in the center of the 70S ribosome. This Pelagibacter ubique (strain HTCC1062) protein is Large ribosomal subunit protein uL22.